The sequence spans 570 residues: Adenine deaminase 2 (570 aa).

It belongs to the metallo-dependent hydrolases superfamily. Adenine deaminase family. Requires Mn(2+) as cofactor.

The enzyme catalyses adenine + H2O + H(+) = hypoxanthine + NH4(+). The chain is Adenine deaminase 2 from Carboxydothermus hydrogenoformans (strain ATCC BAA-161 / DSM 6008 / Z-2901).